The following is a 546-amino-acid chain: Mitochondrial distribution and morphology protein 34 (546 aa).

The SMP-LTD domain maps to 1 to 195 (MAFNFNWSPL…LPAIIHRLSL (195 aa)). Disordered regions lie at residues 208–230 (EVKA…QDPV), 299–319 (SHGG…SHVA), 344–382 (TMGA…CTDS), 395–416 (SSSA…SPDA), and 517–546 (RRIQ…AYGQ). Residues 349-362 (RHPRTRPSRKHKRR) are compositionally biased toward basic residues. Positions 363 to 374 (VVDLRKPQKLDD) are enriched in basic and acidic residues.

Belongs to the MDM34 family. As to quaternary structure, component of the ER-mitochondria encounter structure (ERMES) or MDM complex, composed of MMM1, MDM10, MDM12 and MDM34.

It is found in the mitochondrion outer membrane. Component of the ERMES/MDM complex, which serves as a molecular tether to connect the endoplasmic reticulum (ER) and mitochondria. Components of this complex are involved in the control of mitochondrial shape and protein biogenesis, and function in nonvesicular lipid trafficking between the ER and mitochondria. MDM34 is required for the interaction of the ER-resident membrane protein MMM1 and the outer mitochondrial membrane-resident beta-barrel protein MDM10. This is Mitochondrial distribution and morphology protein 34 from Arthroderma otae (strain ATCC MYA-4605 / CBS 113480) (Microsporum canis).